Reading from the N-terminus, the 191-residue chain is Ion-translocating oxidoreductase complex subunit B (191 aa).

Residues 1 to 26 (MSAIWIAIAVLSALSLVFGGLLGYAS) form a hydrophobic region. Positions 32–91 (EEDPIVEQIDAILPQSQCGQCGYPGCRPYADAVGNNGEMINKCAPGGEQTMLKLAALLNV) constitute a 4Fe-4S domain. Residues C49, C52, C57, C74, C116, C119, C122, C126, C146, C149, C152, and C156 each contribute to the [4Fe-4S] cluster site. 4Fe-4S ferredoxin-type domains are found at residues 107 to 136 (KVAW…GATR) and 137 to 166 (AMHT…MRPV).

It belongs to the 4Fe4S bacterial-type ferredoxin family. RnfB subfamily. As to quaternary structure, the complex is composed of six subunits: RnfA, RnfB, RnfC, RnfD, RnfE and RnfG. [4Fe-4S] cluster serves as cofactor.

Its subcellular location is the cell inner membrane. Functionally, part of a membrane-bound complex that couples electron transfer with translocation of ions across the membrane. This is Ion-translocating oxidoreductase complex subunit B from Erwinia tasmaniensis (strain DSM 17950 / CFBP 7177 / CIP 109463 / NCPPB 4357 / Et1/99).